The following is a 380-amino-acid chain: Cytochrome b (380 aa).

The next 4 helical transmembrane spans lie at 33-53 (SGSL…FLAM), 77-98 (WLIR…YLHV), 113-133 (WNIG…GYVL), and 178-198 (FFAF…IHLL). The heme b site is built by His-83 and His-97. Heme b-binding residues include His-182 and His-196. An a ubiquinone-binding site is contributed by His-201. 4 helical membrane passes run 226-246 (YKDL…ALFS), 288-308 (LGGV…PILH), 320-340 (LSQI…WIGG), and 347-367 (FVLI…IALP).

It belongs to the cytochrome b family. The cytochrome bc1 complex contains 3 respiratory subunits (MT-CYB, CYC1 and UQCRFS1), 2 core proteins (UQCRC1 and UQCRC2) and probably 6 low-molecular weight proteins. Requires heme b as cofactor.

The protein resides in the mitochondrion inner membrane. In terms of biological role, component of the ubiquinol-cytochrome c reductase complex (complex III or cytochrome b-c1 complex) that is part of the mitochondrial respiratory chain. The b-c1 complex mediates electron transfer from ubiquinol to cytochrome c. Contributes to the generation of a proton gradient across the mitochondrial membrane that is then used for ATP synthesis. The chain is Cytochrome b (mt-cyb) from Polyodon spathula (North American paddlefish).